A 356-amino-acid polypeptide reads, in one-letter code: MFS-type transporter tazK (356 aa).

9 helical membrane-spanning segments follow: residues 12–32 (LPFF…ALGH), 42–62 (FLGG…LADF), 69–89 (GVAV…GAIT), 102–122 (MTAW…FIIL), 178–198 (ILLS…LLFV), 211–231 (GAID…VGAF), 257–277 (LHPM…FAWT), 288–308 (ILAG…SLAY), and 320–340 (AISG…LFAP).

This sequence belongs to the major facilitator superfamily. CAR1 family.

Its subcellular location is the membrane. MFS-type transporter; part of the gene cluster that mediates the biosynthesis of azaterrilone A and other azaphilones, a class of fungal metabolites characterized by a highly oxygenated pyrano-quinone bicyclic core and exhibiting a broad range of bioactivities. The protein is MFS-type transporter tazK of Aspergillus terreus (strain NIH 2624 / FGSC A1156).